We begin with the raw amino-acid sequence, 161 residues long: ATP synthase subunit b (161 aa).

The helical transmembrane segment at 12-32 (IAFFLFVFFCMKYIWPNLISL) threads the bilayer.

This sequence belongs to the ATPase B chain family. In terms of assembly, F-type ATPases have 2 components, F(1) - the catalytic core - and F(0) - the membrane proton channel. F(1) has five subunits: alpha(3), beta(3), gamma(1), delta(1), epsilon(1). F(0) has three main subunits: a(1), b(2) and c(10-14). The alpha and beta chains form an alternating ring which encloses part of the gamma chain. F(1) is attached to F(0) by a central stalk formed by the gamma and epsilon chains, while a peripheral stalk is formed by the delta and b chains.

The protein resides in the cell membrane. In terms of biological role, f(1)F(0) ATP synthase produces ATP from ADP in the presence of a proton or sodium gradient. F-type ATPases consist of two structural domains, F(1) containing the extramembraneous catalytic core and F(0) containing the membrane proton channel, linked together by a central stalk and a peripheral stalk. During catalysis, ATP synthesis in the catalytic domain of F(1) is coupled via a rotary mechanism of the central stalk subunits to proton translocation. Its function is as follows. Component of the F(0) channel, it forms part of the peripheral stalk, linking F(1) to F(0). In Wigglesworthia glossinidia brevipalpis, this protein is ATP synthase subunit b.